The chain runs to 22 residues: Brevinin-1OKd (22 aa).

A Lysine amide modification is found at Lys22.

In terms of tissue distribution, expressed by the skin glands.

It localises to the secreted. Antimicrobial peptide. The sequence is that of Brevinin-1OKd from Nidirana okinavana (Kampira Falls frog).